The primary structure comprises 981 residues: Probable NAD kinase 2, chloroplastic (981 aa).

The segment at 319 to 364 (APSAEQVQRFAEIVSDSAKKPIYLHSQEGISRTSAMVSRWKQYVTR) is calmodulin-binding. Disordered regions lie at residues 369–413 (ATQN…DRTM) and 551–601 (TNGK…AERN). 3 stretches are compositionally biased toward polar residues: residues 387 to 406 (TEQLTNSPGFSSEGSENGTP), 551 to 563 (TNGKPSNNGASTS), and 581 to 596 (SDTSNSNGNAPLGSQK).

Belongs to the NAD kinase family.

It localises to the plastid. The protein localises to the chloroplast. The catalysed reaction is NAD(+) + ATP = ADP + NADP(+) + H(+). Its function is as follows. Involved in chlorophyll synthesis and chloroplast protection against oxidative damage. The protein is Probable NAD kinase 2, chloroplastic of Oryza sativa subsp. japonica (Rice).